The following is a 478-amino-acid chain: Adenosylhomocysteinase (478 aa).

3 residues coordinate substrate: Thr-67, Asp-144, and Glu-204. NAD(+) is bound at residue 205–207 (TTT). Substrate-binding residues include Lys-234 and Asp-238. NAD(+)-binding positions include Asn-239, 268–273 (GYGDVG), Glu-291, Asn-326, 347–349 (IGH), and Asn-392.

Belongs to the adenosylhomocysteinase family. NAD(+) is required as a cofactor.

The protein resides in the cytoplasm. The catalysed reaction is S-adenosyl-L-homocysteine + H2O = L-homocysteine + adenosine. It functions in the pathway amino-acid biosynthesis; L-homocysteine biosynthesis; L-homocysteine from S-adenosyl-L-homocysteine: step 1/1. In terms of biological role, may play a key role in the regulation of the intracellular concentration of adenosylhomocysteine. This is Adenosylhomocysteinase from Nitrosomonas eutropha (strain DSM 101675 / C91 / Nm57).